We begin with the raw amino-acid sequence, 90 residues long: uncharacterized protein (90 aa).

The first 18 residues, 1-18 (MKTLPVLVLSLTLLTVFS), serve as a signal peptide directing secretion. Positions 28–50 (QAKQLLRSRRQDRPSKPGFPDEP) are disordered.

The protein localises to the secreted. This is an uncharacterized protein from Homo sapiens (Human).